We begin with the raw amino-acid sequence, 508 residues long: Asparagine--tRNA ligase (508 aa).

Belongs to the class-II aminoacyl-tRNA synthetase family. Homodimer.

It is found in the cytoplasm. The catalysed reaction is tRNA(Asn) + L-asparagine + ATP = L-asparaginyl-tRNA(Asn) + AMP + diphosphate + H(+). The sequence is that of Asparagine--tRNA ligase from Streptococcus suis (strain 05ZYH33).